The primary structure comprises 147 residues: Deoxyuridine 5'-triphosphate nucleotidohydrolase (147 aa).

Substrate is bound by residues R67 to G69, N80, and L84 to D86.

This sequence belongs to the dUTPase family. Mg(2+) is required as a cofactor.

It catalyses the reaction dUTP + H2O = dUMP + diphosphate + H(+). The protein operates within pyrimidine metabolism; dUMP biosynthesis; dUMP from dCTP (dUTP route): step 2/2. Functionally, this enzyme is involved in nucleotide metabolism: it produces dUMP, the immediate precursor of thymidine nucleotides and it decreases the intracellular concentration of dUTP so that uracil cannot be incorporated into DNA. The sequence is that of Deoxyuridine 5'-triphosphate nucleotidohydrolase from Dictyoglomus turgidum (strain DSM 6724 / Z-1310).